The sequence spans 102 residues: Thioredoxin (102 aa).

The Thioredoxin domain occupies 1–102 (MVQIVSQDNF…SLVKLISKHQ (102 aa)). A disulfide bond links Cys-28 and Cys-31.

This sequence belongs to the thioredoxin family.

In terms of biological role, participates in various redox reactions through the reversible oxidation of its active center dithiol to a disulfide and catalyzes dithiol-disulfide exchange reactions. This Chlamydia muridarum (strain MoPn / Nigg) protein is Thioredoxin (trxA).